The chain runs to 167 residues: Endoribonuclease YbeY (167 aa).

His-131, His-135, and His-141 together coordinate Zn(2+).

It belongs to the endoribonuclease YbeY family. The cofactor is Zn(2+).

It localises to the cytoplasm. In terms of biological role, single strand-specific metallo-endoribonuclease involved in late-stage 70S ribosome quality control and in maturation of the 3' terminus of the 16S rRNA. The protein is Endoribonuclease YbeY of Rickettsia africae (strain ESF-5).